We begin with the raw amino-acid sequence, 1849 residues long: SH3 and multiple ankyrin repeat domains protein 2 (1849 aa).

The segment at 1-33 (MPRSPTSSEDEMAQSFSDYSVGSESDSSKEETI) is disordered. A compositionally biased stretch (low complexity) spans 15–25 (SFSDYSVGSES). 6 ANK repeats span residues 196–226 (TGETPLTLAAQLDDSVEVIKALKNGGAHLDF), 230–259 (DGMTALHKAARARNQVALKTLLELGASPDY), 263–293 (YGLTPLYHTAIVGGDPYCCELLLHEHATVCC), 297–326 (NGWHEIHQACRYGHVQHLEHLLFYGADMSA), 330–359 (SGNTALHICALYNQDSCARVLLFRGGNKEL), and 363–393 (NSQTPFQVAIIAGNFELAEYIKNHKETDIVP). Residues 451-493 (QQMPSKPEGAAKTIGSYVPGPRSRSPSLNRLGGAGEDGKRPQP) form a disordered region. The 60-residue stretch at 526 to 585 (VPGRLFVAVKPYQPQVDGEIPLHRGDRVKVLSIGEGGFWEGSARGHIGWFPAECVEEVQC) folds into the SH3 domain. Residues 626-720 (TVVLQKKDNE…HLVLKVVTVT (95 aa)) enclose the PDZ domain. The span at 764–774 (SVRKKKDKPEE) shows a compositional bias: basic and acidic residues. The segment at 764–808 (SVRKKKDKPEEIVPASKPSRAAENMAVEPRVATIKQRPSSRCFPA) is disordered. A Phosphoserine modification is found at S831. At T860 the chain carries Phosphothreonine. A disordered region spans residues 878–910 (LSMPDTSEDIPPPPQSVPPSPPPPSPTTYNCPK). Over residues 887 to 903 (IPPPPQSVPPSPPPPSP) the composition is skewed to pro residues. At S960 the chain carries Phosphoserine. 4 disordered regions span residues 1013 to 1293 (LVKQ…RKGD), 1328 to 1371 (LQEE…TTVP), 1432 to 1526 (PALS…GGEN), and 1574 to 1594 (SFVIPPPAPPPPPGSAQPGMA). A compositionally biased stretch (low complexity) spans 1040–1052 (STSSSGKSSQGSS). The span at 1086-1097 (VRDREKRLEARR) shows a compositional bias: basic and acidic residues. Residue S1099 is modified to Phosphoserine. Positions 1128-1138 (EEGDFADEDSA) are enriched in acidic residues. Composition is skewed to low complexity over residues 1159–1170 (GGAEASAPGEAG), 1181–1199 (GPESSPAVPSASSGTAGPG), and 1208–1221 (RLLDPSSPLALALS). Positions 1274–1293 (RRQETENKYETDLGRDRKGD) are enriched in basic and acidic residues. T1278 is subject to Phosphothreonine. Positions 1327 to 1333 (ALQEEDE) match the SH3-binding motif. Low complexity predominate over residues 1343–1357 (SSPSEVPEGVSETEG). Polar residues predominate over residues 1445–1460 (TPQSPSLNSSQPTNSA). The span at 1494–1505 (VDSRSSSDHHLE) shows a compositional bias: basic and acidic residues. The span at 1506–1522 (TTSTISTVSSISTLSSE) shows a compositional bias: low complexity. A compositionally biased stretch (pro residues) spans 1577–1588 (IPPPAPPPPPGS). Residue T1667 is glycosylated (O-linked (GlcNAc) threonine). Residues 1678–1692 (FTVRPGTSQPITLQS) are compositionally biased toward polar residues. The segment at 1678-1776 (FTVRPGTSQP…SILQQPISNK (99 aa)) is disordered. Residues S1709 and S1713 each carry the phosphoserine modification. Low complexity-rich tracts occupy residues 1721-1738 (TLPAPLSAATASPSPALS) and 1760-1774 (RSRSPSPSILQQPIS). In terms of domain architecture, SAM spans 1786 to 1849 (WTKPDVADWL…ERALKQLLDR (64 aa)).

Belongs to the SHANK family. As to quaternary structure, is part of a complex with DLG4/PSD-95 and DLGAP1/GKAP. Interacts with CTTN/cortactin SH3 domain, DLGAP1/GKAP and alpha-latrotoxin receptor 1. Interacts with DNM2, DBNL, GRID2, BAIAP2, SLC9A3, PLCB3 and CFTR. Interacts (via proline-rich region) with PDE4D. Interacts with ABI1 (via SH3 domain). As to expression, isoform 3 is present in epithelial colonic cells (at protein level).

Its subcellular location is the apical cell membrane. It localises to the cytoplasm. It is found in the synapse. The protein localises to the postsynaptic density. The protein resides in the cell projection. Its subcellular location is the growth cone. It localises to the dendritic spine. Seems to be an adapter protein in the postsynaptic density (PSD) of excitatory synapses that interconnects receptors of the postsynaptic membrane including NMDA-type and metabotropic glutamate receptors, and the actin-based cytoskeleton. May play a role in the structural and functional organization of the dendritic spine and synaptic junction. In Homo sapiens (Human), this protein is SH3 and multiple ankyrin repeat domains protein 2 (SHANK2).